The primary structure comprises 71 residues: MIFKVFYQENADEVPVREKTKTLYIEAESERDVRRKLQDRSINIEYIQPLEGAHLEYEKQSPNFQVLEISS.

It belongs to the RNA polymerase subunit epsilon family. As to quaternary structure, RNAP is composed of a core of 2 alpha, a beta and a beta' subunit. The core is associated with a delta subunit, and at least one of epsilon or omega. When a sigma factor is associated with the core the holoenzyme is formed, which can initiate transcription.

The enzyme catalyses RNA(n) + a ribonucleoside 5'-triphosphate = RNA(n+1) + diphosphate. A non-essential component of RNA polymerase (RNAP). The polypeptide is DNA-directed RNA polymerase subunit epsilon (Geobacillus thermodenitrificans (strain NG80-2)).